We begin with the raw amino-acid sequence, 71 residues long: Disintegrin tzabcanin (71 aa).

Residues G1–A71 form the Disintegrin domain. 6 disulfides stabilise this stretch: C4–C19, C6–C14, C13–C36, C27–C33, C32–C57, and C45–C64. The Cell attachment site signature appears at R49 to D51.

It belongs to the venom metalloproteinase (M12B) family. P-II subfamily. P-IIa sub-subfamily. As to expression, expressed by the venom gland.

The protein resides in the secreted. In terms of biological role, inhibits fibrinogen interaction with platelets. Acts by binding to alpha-IIb/beta-3 (ITGA2B/ITGB3) on the platelet surface and inhibits aggregation induced by ADP, thrombin, platelet-activating factor and collagen. Inhibits cell adhesion to vitronectin, probably by blocking its receptor integrin alpha-V/beta-3 (ITGAV/ITGB3), and to fibronectin in vitro. Shows little to no cytotoxicity in vitro. The sequence is that of Disintegrin tzabcanin from Crotalus tzabcan (Yucatan neotropical rattlesnake).